Here is a 238-residue protein sequence, read N- to C-terminus: tRNA (guanine-N(1)-)-methyltransferase (238 aa).

132 to 137 is a binding site for S-adenosyl-L-methionine; sequence IGDYVL.

It belongs to the RNA methyltransferase TrmD family. In terms of assembly, homodimer.

It is found in the cytoplasm. The catalysed reaction is guanosine(37) in tRNA + S-adenosyl-L-methionine = N(1)-methylguanosine(37) in tRNA + S-adenosyl-L-homocysteine + H(+). In terms of biological role, specifically methylates guanosine-37 in various tRNAs. This chain is tRNA (guanine-N(1)-)-methyltransferase, found in Nitrobacter hamburgensis (strain DSM 10229 / NCIMB 13809 / X14).